We begin with the raw amino-acid sequence, 1026 residues long: Multidrug resistance protein MdtC (1026 aa).

The next 11 helical transmembrane spans lie at 15–35, 333–353, 360–380, 387–407, 431–451, 463–483, 528–548, 853–873, 897–917, 953–973, and 984–1004; these read ILIA…LPVA, EVEE…FLFL, LIPA…MYLC, LSLM…IVVL, VGFT…PLLL, FAVT…TLTP, LVGV…IAIP, LILI…LYES, LFNA…IGIV, PIMM…LSGG, and ITIV…TPVV.

This sequence belongs to the resistance-nodulation-cell division (RND) (TC 2.A.6) family. MdtC subfamily. In terms of assembly, part of a tripartite efflux system composed of MdtA, MdtB and MdtC. MdtC forms a heteromultimer with MdtB.

The protein localises to the cell inner membrane. The sequence is that of Multidrug resistance protein MdtC from Salmonella schwarzengrund (strain CVM19633).